The following is a 174-amino-acid chain: Crossover junction endodeoxyribonuclease RuvC (174 aa).

Catalysis depends on residues aspartate 8, glutamate 67, and aspartate 139. Positions 8, 67, and 139 each coordinate Mg(2+).

This sequence belongs to the RuvC family. As to quaternary structure, homodimer which binds Holliday junction (HJ) DNA. The HJ becomes 2-fold symmetrical on binding to RuvC with unstacked arms; it has a different conformation from HJ DNA in complex with RuvA. In the full resolvosome a probable DNA-RuvA(4)-RuvB(12)-RuvC(2) complex forms which resolves the HJ. Mg(2+) is required as a cofactor.

The protein localises to the cytoplasm. It catalyses the reaction Endonucleolytic cleavage at a junction such as a reciprocal single-stranded crossover between two homologous DNA duplexes (Holliday junction).. The RuvA-RuvB-RuvC complex processes Holliday junction (HJ) DNA during genetic recombination and DNA repair. Endonuclease that resolves HJ intermediates. Cleaves cruciform DNA by making single-stranded nicks across the HJ at symmetrical positions within the homologous arms, yielding a 5'-phosphate and a 3'-hydroxyl group; requires a central core of homology in the junction. The consensus cleavage sequence is 5'-(A/T)TT(C/G)-3'. Cleavage occurs on the 3'-side of the TT dinucleotide at the point of strand exchange. HJ branch migration catalyzed by RuvA-RuvB allows RuvC to scan DNA until it finds its consensus sequence, where it cleaves and resolves the cruciform DNA. This is Crossover junction endodeoxyribonuclease RuvC from Pseudomonas savastanoi pv. phaseolicola (strain 1448A / Race 6) (Pseudomonas syringae pv. phaseolicola (strain 1448A / Race 6)).